The primary structure comprises 130 residues: Sec-independent protein translocase protein TatB (130 aa).

A helical transmembrane segment spans residues 1-21; sequence MFDISFTELIVIGIVALVVIG. Residues 70–130 are disordered; that stretch reads VDSFQNSVHS…TPKEPRQSGS (61 aa). Composition is skewed to basic and acidic residues over residues 80–89 and 96–111; these read EINKIQETAD and PEKE…KTEP.

It belongs to the TatB family. In terms of assembly, the Tat system comprises two distinct complexes: a TatABC complex, containing multiple copies of TatA, TatB and TatC subunits, and a separate TatA complex, containing only TatA subunits. Substrates initially bind to the TatABC complex, which probably triggers association of the separate TatA complex to form the active translocon.

The protein localises to the cell inner membrane. In terms of biological role, part of the twin-arginine translocation (Tat) system that transports large folded proteins containing a characteristic twin-arginine motif in their signal peptide across membranes. Together with TatC, TatB is part of a receptor directly interacting with Tat signal peptides. TatB may form an oligomeric binding site that transiently accommodates folded Tat precursor proteins before their translocation. The protein is Sec-independent protein translocase protein TatB of Nitrosomonas eutropha (strain DSM 101675 / C91 / Nm57).